Consider the following 270-residue polypeptide: Mediator of RNA polymerase II transcription subunit 4 (270 aa).

Positions 1–22 (MAASSSGEKEKERLGGGLGVAG) are disordered. Residue Ala2 is modified to N-acetylalanine. Coiled-coil stretches lie at residues 24–48 (NSTRERLLSALEDLEVLSRELIEML) and 90–131 (HHEM…AKEK). A Phosphoserine modification is found at Ser32. Residues 226 to 270 (DMSMNMLPPNHSSDFLLEPPGHNKENEDDVEIMSTDSSSSSSESD) form a disordered region. Over residues 259 to 270 (STDSSSSSSESD) the composition is skewed to low complexity.

It belongs to the Mediator complex subunit 4 family. In terms of assembly, component of the Mediator complex, which is composed of MED1, MED4, MED6, MED7, MED8, MED9, MED10, MED11, MED12, MED13, MED13L, MED14, MED15, MED16, MED17, MED18, MED19, MED20, MED21, MED22, MED23, MED24, MED25, MED26, MED27, MED29, MED30, MED31, CCNC, CDK8 and CDC2L6/CDK11. The MED12, MED13, CCNC and CDK8 subunits form a distinct module termed the CDK8 module. Mediator containing the CDK8 module is less active than Mediator lacking this module in supporting transcriptional activation. Individual preparations of the Mediator complex lacking one or more distinct subunits have been variously termed ARC, CRSP, DRIP, PC2, SMCC and TRAP.

It is found in the nucleus. Component of the Mediator complex, a coactivator involved in the regulated transcription of nearly all RNA polymerase II-dependent genes. Mediator functions as a bridge to convey information from gene-specific regulatory proteins to the basal RNA polymerase II transcription machinery. Mediator is recruited to promoters by direct interactions with regulatory proteins and serves as a scaffold for the assembly of a functional preinitiation complex with RNA polymerase II and the general transcription factors. In Homo sapiens (Human), this protein is Mediator of RNA polymerase II transcription subunit 4 (MED4).